A 386-amino-acid chain; its full sequence is Arginine biosynthesis bifunctional protein ArgJ (386 aa).

T148, K170, T181, E261, N381, and S386 together coordinate substrate. T181 serves as the catalytic Nucleophile.

It belongs to the ArgJ family. In terms of assembly, heterotetramer of two alpha and two beta chains.

It localises to the cytoplasm. The enzyme catalyses N(2)-acetyl-L-ornithine + L-glutamate = N-acetyl-L-glutamate + L-ornithine. It carries out the reaction L-glutamate + acetyl-CoA = N-acetyl-L-glutamate + CoA + H(+). The protein operates within amino-acid biosynthesis; L-arginine biosynthesis; L-ornithine and N-acetyl-L-glutamate from L-glutamate and N(2)-acetyl-L-ornithine (cyclic): step 1/1. Its pathway is amino-acid biosynthesis; L-arginine biosynthesis; N(2)-acetyl-L-ornithine from L-glutamate: step 1/4. Functionally, catalyzes two activities which are involved in the cyclic version of arginine biosynthesis: the synthesis of N-acetylglutamate from glutamate and acetyl-CoA as the acetyl donor, and of ornithine by transacetylation between N(2)-acetylornithine and glutamate. The sequence is that of Arginine biosynthesis bifunctional protein ArgJ from Corynebacterium diphtheriae (strain ATCC 700971 / NCTC 13129 / Biotype gravis).